We begin with the raw amino-acid sequence, 364 residues long: Peptide chain release factor 1 (364 aa).

Residue Q237 is modified to N5-methylglutamine.

It belongs to the prokaryotic/mitochondrial release factor family. Post-translationally, methylated by PrmC. Methylation increases the termination efficiency of RF1.

The protein resides in the cytoplasm. Its function is as follows. Peptide chain release factor 1 directs the termination of translation in response to the peptide chain termination codons UAG and UAA. The chain is Peptide chain release factor 1 from Rubrobacter xylanophilus (strain DSM 9941 / JCM 11954 / NBRC 16129 / PRD-1).